Consider the following 291-residue polypeptide: MEMO1 family protein TK1477 (291 aa).

Belongs to the MEMO1 family.

This is MEMO1 family protein TK1477 from Thermococcus kodakarensis (strain ATCC BAA-918 / JCM 12380 / KOD1) (Pyrococcus kodakaraensis (strain KOD1)).